An 83-amino-acid polypeptide reads, in one-letter code: Conotoxin p21a (83 aa).

Residues Pro24 and Pro43 each carry the 4-hydroxyproline; partial modification. Residue His83 is modified to Histidine amide.

As to quaternary structure, may form a non-covalent dimer. Post-translationally, contains 5 disulfide bonds. As to expression, expressed by the venom duct.

Its subcellular location is the secreted. The polypeptide is Conotoxin p21a (Conus purpurascens (Purple cone)).